The following is a 200-amino-acid chain: Recombination protein RecR (200 aa).

The segment at 59–74 (CEKCNTFTEAQICEVC) adopts a C4-type zinc-finger fold. The Toprim domain maps to 82-177 (ALLCVVETPA…AVTRLARGVP (96 aa)).

Belongs to the RecR family.

In terms of biological role, may play a role in DNA repair. It seems to be involved in an RecBC-independent recombinational process of DNA repair. It may act with RecF and RecO. The chain is Recombination protein RecR from Burkholderia mallei (strain NCTC 10247).